Consider the following 370-residue polypeptide: Dual-specificity RNA methyltransferase RlmN (370 aa).

The active-site Proton acceptor is E93. The Radical SAM core domain maps to D99–D331. C106 and C336 are disulfide-bonded. C113, C117, and C120 together coordinate [4Fe-4S] cluster. S-adenosyl-L-methionine contacts are provided by residues G162–E163, S194, S216–H218, and N293. The S-methylcysteine intermediate role is filled by C336.

The protein belongs to the radical SAM superfamily. RlmN family. The cofactor is [4Fe-4S] cluster.

The protein resides in the cytoplasm. The catalysed reaction is adenosine(2503) in 23S rRNA + 2 reduced [2Fe-2S]-[ferredoxin] + 2 S-adenosyl-L-methionine = 2-methyladenosine(2503) in 23S rRNA + 5'-deoxyadenosine + L-methionine + 2 oxidized [2Fe-2S]-[ferredoxin] + S-adenosyl-L-homocysteine. It carries out the reaction adenosine(37) in tRNA + 2 reduced [2Fe-2S]-[ferredoxin] + 2 S-adenosyl-L-methionine = 2-methyladenosine(37) in tRNA + 5'-deoxyadenosine + L-methionine + 2 oxidized [2Fe-2S]-[ferredoxin] + S-adenosyl-L-homocysteine. Functionally, specifically methylates position 2 of adenine 2503 in 23S rRNA and position 2 of adenine 37 in tRNAs. m2A2503 modification seems to play a crucial role in the proofreading step occurring at the peptidyl transferase center and thus would serve to optimize ribosomal fidelity. The protein is Dual-specificity RNA methyltransferase RlmN of Coxiella burnetii (strain CbuK_Q154) (Coxiella burnetii (strain Q154)).